Consider the following 309-residue polypeptide: Cytidine deaminase (309 aa).

2 CMP/dCMP-type deaminase domains span residues 48–168 and 200–309; these read DEDA…FGPR and DDND…SLSL. Residue 89–91 coordinates substrate; sequence NME. Residue H102 coordinates Zn(2+). E104 serves as the catalytic Proton donor. 2 residues coordinate Zn(2+): C129 and C132.

It belongs to the cytidine and deoxycytidylate deaminase family. As to quaternary structure, homodimer. Zn(2+) is required as a cofactor.

The enzyme catalyses cytidine + H2O + H(+) = uridine + NH4(+). It catalyses the reaction 2'-deoxycytidine + H2O + H(+) = 2'-deoxyuridine + NH4(+). This enzyme scavenges exogenous and endogenous cytidine and 2'-deoxycytidine for UMP synthesis. In Sodalis glossinidius (strain morsitans), this protein is Cytidine deaminase.